The chain runs to 520 residues: UDP-N-acetylmuramoyl-L-alanyl-D-glutamate--2,6-diaminopimelate ligase (520 aa).

Leu-48 contacts UDP-N-acetyl-alpha-D-muramoyl-L-alanyl-D-glutamate. Position 134-140 (134-140 (GTSGKTT)) interacts with ATP. UDP-N-acetyl-alpha-D-muramoyl-L-alanyl-D-glutamate is bound by residues 176 to 177 (TT), Ser-203, and Arg-211. Position 243 is an N6-carboxylysine (Lys-243). Meso-2,6-diaminopimelate-binding positions include Arg-405, 429-432 (DNPR), Gly-483, and Glu-487. Residues 429-432 (DNPR) carry the Meso-diaminopimelate recognition motif motif.

This sequence belongs to the MurCDEF family. MurE subfamily. It depends on Mg(2+) as a cofactor. Carboxylation is probably crucial for Mg(2+) binding and, consequently, for the gamma-phosphate positioning of ATP.

The protein resides in the cytoplasm. The enzyme catalyses UDP-N-acetyl-alpha-D-muramoyl-L-alanyl-D-glutamate + meso-2,6-diaminopimelate + ATP = UDP-N-acetyl-alpha-D-muramoyl-L-alanyl-gamma-D-glutamyl-meso-2,6-diaminopimelate + ADP + phosphate + H(+). The protein operates within cell wall biogenesis; peptidoglycan biosynthesis. Catalyzes the addition of meso-diaminopimelic acid to the nucleotide precursor UDP-N-acetylmuramoyl-L-alanyl-D-glutamate (UMAG) in the biosynthesis of bacterial cell-wall peptidoglycan. The polypeptide is UDP-N-acetylmuramoyl-L-alanyl-D-glutamate--2,6-diaminopimelate ligase (Mycolicibacterium paratuberculosis (strain ATCC BAA-968 / K-10) (Mycobacterium paratuberculosis)).